A 310-amino-acid chain; its full sequence is Homocysteine S-methyltransferase (310 aa).

Residues 1-310 (MSQNNPLRAL…ADIAALKARS (310 aa)) enclose the Hcy-binding domain. Zn(2+) is bound by residues Cys229, Cys295, and Cys296.

As to quaternary structure, monomer. The cofactor is Zn(2+).

The enzyme catalyses S-methyl-L-methionine + L-homocysteine = 2 L-methionine + H(+). In terms of biological role, catalyzes methyl transfer from S-methylmethionine or S-adenosylmethionine (less efficient) to homocysteine, selenohomocysteine and less efficiently selenocysteine. This chain is Homocysteine S-methyltransferase (mmuM), found in Escherichia coli (strain K12).